We begin with the raw amino-acid sequence, 305 residues long: Tyrosine recombinase XerD (305 aa).

A Core-binding (CB) domain is found at 3–88 (PADASVIERF…TLRAFYGLCL (86 aa)). The Tyr recombinase domain occupies 109-299 (SLPKALTESQ…ARQHLQKLHA (191 aa)). Catalysis depends on residues arginine 149, lysine 173, histidine 251, arginine 254, and histidine 277. Catalysis depends on tyrosine 286, which acts as the O-(3'-phospho-DNA)-tyrosine intermediate.

Belongs to the 'phage' integrase family. XerD subfamily. In terms of assembly, forms a cyclic heterotetrameric complex composed of two molecules of XerC and two molecules of XerD.

Its subcellular location is the cytoplasm. Functionally, site-specific tyrosine recombinase, which acts by catalyzing the cutting and rejoining of the recombining DNA molecules. The XerC-XerD complex is essential to convert dimers of the bacterial chromosome into monomers to permit their segregation at cell division. It also contributes to the segregational stability of plasmids. The chain is Tyrosine recombinase XerD from Xanthomonas axonopodis pv. citri (strain 306).